The following is a 288-amino-acid chain: MAAGKEIRGKIKSVENTKKITKAMEMVAASKMRKAQDRMRAARPYAEKVRNIAAHLGEANPEYVHPFMKANDAKAAGIIVVTTDKGLCGGMNTNVLRAVTTKLRELQSTGVDVQSVAIGNKGLGFLNRVGAKVVAHATGLGDTPHLDKLIGPVKVLLDAYAEGKINAVYLSYTKFINTMKQESVVEQLLPLSSEQMQAQKTGHGWDYIYEPDAQSVIDELLVRYVESLIYQAVAENMASEQSARMVAMKAATDNAGNVINELKLVYNKTRQAAITKELSEIVAGAAAV.

Belongs to the ATPase gamma chain family. As to quaternary structure, F-type ATPases have 2 components, CF(1) - the catalytic core - and CF(0) - the membrane proton channel. CF(1) has five subunits: alpha(3), beta(3), gamma(1), delta(1), epsilon(1). CF(0) has three main subunits: a, b and c.

The protein localises to the cell inner membrane. In terms of biological role, produces ATP from ADP in the presence of a proton gradient across the membrane. The gamma chain is believed to be important in regulating ATPase activity and the flow of protons through the CF(0) complex. This chain is ATP synthase gamma chain, found in Acidovorax ebreus (strain TPSY) (Diaphorobacter sp. (strain TPSY)).